We begin with the raw amino-acid sequence, 275 residues long: Large ribosomal subunit protein uL2c (275 aa).

Residues 219-255 (TVRGSVMNPCDHPHGGGEGRAPIGRTRPLTPWGKPAL) form a disordered region.

It belongs to the universal ribosomal protein uL2 family. In terms of assembly, part of the 50S ribosomal subunit.

Its subcellular location is the plastid. The protein resides in the chloroplast. In Trieres chinensis (Marine centric diatom), this protein is Large ribosomal subunit protein uL2c (rpl2).